Here is a 107-residue protein sequence, read N- to C-terminus: Multidrug resistance protein mmr (107 aa).

Transmembrane regions (helical) follow at residues 2–19 (IYLY…ATSL), 29–51 (LWPT…LSIS), 58–80 (VAYA…LFLG), and 84–106 (SVMK…LAGA).

The protein belongs to the drug/metabolite transporter (DMT) superfamily. Small multidrug resistance (SMR) (TC 2.A.7.1) family. Mmr subfamily.

The protein localises to the cell membrane. Its function is as follows. Multidrug efflux pump. Confers resistance to tetraphenylphosphonium (TPP), erythromycin, ethidium bromide, acriflavine, safranin O and pyronin Y. The sequence is that of Multidrug resistance protein mmr (mmr) from Mycobacterium bovis (strain ATCC BAA-935 / AF2122/97).